A 637-amino-acid chain; its full sequence is Chaperone protein DnaK (637 aa).

A Phosphothreonine; by autocatalysis modification is found at Thr196. 2 disordered regions span residues 503–525 and 598–637; these read AEIN…RKEE and SGAG…DDKK. Residues 598–619 are compositionally biased toward low complexity; the sequence is SGAGAAQAQPEAPQNSGSSQSS.

It belongs to the heat shock protein 70 family.

Acts as a chaperone. The protein is Chaperone protein DnaK of Chlorobium chlorochromatii (strain CaD3).